The sequence spans 471 residues: Glutamate--tRNA ligase (471 aa).

A 'HIGH' region motif is present at residues 9–19; the sequence is PSPTGYLHVGG. 4 residues coordinate Zn(2+): cysteine 98, cysteine 100, cysteine 125, and histidine 127. The 'KMSKS' region signature appears at 237–241; sequence KLSKR. Lysine 240 contacts ATP.

Belongs to the class-I aminoacyl-tRNA synthetase family. Glutamate--tRNA ligase type 1 subfamily. Monomer. Zn(2+) serves as cofactor.

It is found in the cytoplasm. The catalysed reaction is tRNA(Glu) + L-glutamate + ATP = L-glutamyl-tRNA(Glu) + AMP + diphosphate. Its function is as follows. Catalyzes the attachment of glutamate to tRNA(Glu) in a two-step reaction: glutamate is first activated by ATP to form Glu-AMP and then transferred to the acceptor end of tRNA(Glu). The chain is Glutamate--tRNA ligase from Escherichia coli O6:K15:H31 (strain 536 / UPEC).